The following is a 684-amino-acid chain: U4/U6 small nuclear ribonucleoprotein Prp3 (684 aa).

Residues 1–87 form the PWI domain; it reads MSLSKRELDE…HSKSNSDRNR (87 aa). Basic and acidic residues predominate over residues 73-107; it reads GRSSRHSKSNSDRNRKRELKDVFGDDSEVSKESSG. Disordered stretches follow at residues 73–109 and 162–183; these read GRSSRHSKSNSDRNRKRELKDVFGDDSEVSKESSGVK and FISPPTPQPKISSSSQSERLPI. Over residues 170-183 the composition is skewed to polar residues; sequence PKISSSSQSERLPI.

Component of the precatalytic spliceosome (spliceosome B complex). Component of the U4/U6-U5 tri-snRNP complex, a building block of the precatalytic spliceosome (spliceosome B complex). The U4/U6-U5 tri-snRNP complex is composed of the U4, U6 and U5 snRNAs and at least PRPF3, PRPF4, PRPF6, PRPF8, PRPF31, SNRNP200, TXNL4A, SNRNP40, SNRPB, SNRPD1, SNRPD2, SNRPD3, SNRPE, SNRPF, SNRPG, DDX23, CD2BP2, PPIH, SNU13, EFTUD2, SART1 and USP39, plus LSM2, LSM3, LSM4, LSM5, LSM6, LSM7 and LSM8.

It localises to the nucleus. The protein resides in the nucleus speckle. Plays a role in pre-mRNA splicing as component of the U4/U6-U5 tri-snRNP complex that is involved in spliceosome assembly, and as component of the precatalytic spliceosome (spliceosome B complex). This Gallus gallus (Chicken) protein is U4/U6 small nuclear ribonucleoprotein Prp3 (PRPF3).